A 119-amino-acid chain; its full sequence is Holo-[acyl-carrier-protein] synthase (119 aa).

Mg(2+)-binding residues include Asp-5 and Glu-51.

Belongs to the P-Pant transferase superfamily. AcpS family. Requires Mg(2+) as cofactor.

Its subcellular location is the cytoplasm. It catalyses the reaction apo-[ACP] + CoA = holo-[ACP] + adenosine 3',5'-bisphosphate + H(+). Its function is as follows. Transfers the 4'-phosphopantetheine moiety from coenzyme A to a Ser of acyl-carrier-protein. In Helicobacter pylori (strain G27), this protein is Holo-[acyl-carrier-protein] synthase.